A 238-amino-acid chain; its full sequence is Enolase-phosphatase E1 (238 aa).

The protein belongs to the HAD-like hydrolase superfamily. MasA/MtnC family. In terms of assembly, monomer. It depends on Mg(2+) as a cofactor.

The enzyme catalyses 5-methylsulfanyl-2,3-dioxopentyl phosphate + H2O = 1,2-dihydroxy-5-(methylsulfanyl)pent-1-en-3-one + phosphate. Its pathway is amino-acid biosynthesis; L-methionine biosynthesis via salvage pathway; L-methionine from S-methyl-5-thio-alpha-D-ribose 1-phosphate: step 3/6. It functions in the pathway amino-acid biosynthesis; L-methionine biosynthesis via salvage pathway; L-methionine from S-methyl-5-thio-alpha-D-ribose 1-phosphate: step 4/6. Its function is as follows. Bifunctional enzyme that catalyzes the enolization of 2,3-diketo-5-methylthiopentyl-1-phosphate (DK-MTP-1-P) into the intermediate 2-hydroxy-3-keto-5-methylthiopentenyl-1-phosphate (HK-MTPenyl-1-P), which is then dephosphorylated to form the acireductone 1,2-dihydroxy-3-keto-5-methylthiopentene (DHK-MTPene). The chain is Enolase-phosphatase E1 from Synechococcus elongatus (strain ATCC 33912 / PCC 7942 / FACHB-805) (Anacystis nidulans R2).